Here is a 188-residue protein sequence, read N- to C-terminus: dCTP deaminase (188 aa).

DCTP-binding positions include 111-116 (KSTYAR), 135-137 (TLE), Q156, Y170, and Q180. E137 serves as the catalytic Proton donor/acceptor.

This sequence belongs to the dCTP deaminase family. Homotrimer.

The catalysed reaction is dCTP + H2O + H(+) = dUTP + NH4(+). The protein operates within pyrimidine metabolism; dUMP biosynthesis; dUMP from dCTP (dUTP route): step 1/2. In terms of biological role, catalyzes the deamination of dCTP to dUTP. This is dCTP deaminase from Nitrosococcus oceani (strain ATCC 19707 / BCRC 17464 / JCM 30415 / NCIMB 11848 / C-107).